The chain runs to 316 residues: Erythritol catabolism regulatory protein EryD (316 aa).

Positions 23–42 form a DNA-binding region, H-T-H motif; that stretch reads QSAVAKRLGLPSVKAHRLIA.

This sequence belongs to the SorC transcriptional regulatory family.

With respect to regulation, erythritol may act as an inducer, probably by binding to EryD and inhibiting its repressor activity. Functionally, represses the expression of the eryABCD operon, which is involved in erythritol catabolism. This chain is Erythritol catabolism regulatory protein EryD, found in Brucella abortus (strain 2308).